The sequence spans 119 residues: Ribonuclease P protein component (119 aa).

It belongs to the RnpA family. In terms of assembly, consists of a catalytic RNA component (M1 or rnpB) and a protein subunit.

The catalysed reaction is Endonucleolytic cleavage of RNA, removing 5'-extranucleotides from tRNA precursor.. Functionally, RNaseP catalyzes the removal of the 5'-leader sequence from pre-tRNA to produce the mature 5'-terminus. It can also cleave other RNA substrates such as 4.5S RNA. The protein component plays an auxiliary but essential role in vivo by binding to the 5'-leader sequence and broadening the substrate specificity of the ribozyme. This chain is Ribonuclease P protein component, found in Nitrosococcus oceani (strain ATCC 19707 / BCRC 17464 / JCM 30415 / NCIMB 11848 / C-107).